A 388-amino-acid polypeptide reads, in one-letter code: Succinate--CoA ligase [ADP-forming] subunit beta (388 aa).

Positions 9–244 (KQLFARYGLP…PSQEDSREAH (236 aa)) constitute an ATP-grasp domain. Residues Lys-46, 53–55 (GRG), Glu-99, Thr-102, and Glu-107 each bind ATP. 2 residues coordinate Mg(2+): Asn-199 and Asp-213. Substrate contacts are provided by residues Asn-264 and 321 to 323 (GIV).

The protein belongs to the succinate/malate CoA ligase beta subunit family. Heterotetramer of two alpha and two beta subunits. It depends on Mg(2+) as a cofactor.

The enzyme catalyses succinate + ATP + CoA = succinyl-CoA + ADP + phosphate. It catalyses the reaction GTP + succinate + CoA = succinyl-CoA + GDP + phosphate. It participates in carbohydrate metabolism; tricarboxylic acid cycle; succinate from succinyl-CoA (ligase route): step 1/1. Functionally, succinyl-CoA synthetase functions in the citric acid cycle (TCA), coupling the hydrolysis of succinyl-CoA to the synthesis of either ATP or GTP and thus represents the only step of substrate-level phosphorylation in the TCA. The beta subunit provides nucleotide specificity of the enzyme and binds the substrate succinate, while the binding sites for coenzyme A and phosphate are found in the alpha subunit. The protein is Succinate--CoA ligase [ADP-forming] subunit beta of Pectobacterium carotovorum subsp. carotovorum (strain PC1).